The chain runs to 173 residues: Bifunctional protein PyrR (173 aa).

The short motif at 93-105 (VILVDDVLYTGRT) is the PRPP-binding element.

Belongs to the purine/pyrimidine phosphoribosyltransferase family. PyrR subfamily. In terms of assembly, homodimer and homohexamer; in equilibrium.

It carries out the reaction UMP + diphosphate = 5-phospho-alpha-D-ribose 1-diphosphate + uracil. In terms of biological role, regulates transcriptional attenuation of the pyrimidine nucleotide (pyr) operon by binding in a uridine-dependent manner to specific sites on pyr mRNA. This disrupts an antiterminator hairpin in the RNA and favors formation of a downstream transcription terminator, leading to a reduced expression of downstream genes. Its function is as follows. Also displays a weak uracil phosphoribosyltransferase activity which is not physiologically significant. The chain is Bifunctional protein PyrR from Streptococcus suis (strain 05ZYH33).